The following is a 498-amino-acid chain: ATP synthase subunit beta, chloroplastic (498 aa).

ATP is bound at residue 172–179; sequence GGAGVGKT.

The protein belongs to the ATPase alpha/beta chains family. In terms of assembly, F-type ATPases have 2 components, CF(1) - the catalytic core - and CF(0) - the membrane proton channel. CF(1) has five subunits: alpha(3), beta(3), gamma(1), delta(1), epsilon(1). CF(0) has four main subunits: a(1), b(1), b'(1) and c(9-12).

The protein resides in the plastid. The protein localises to the chloroplast thylakoid membrane. It carries out the reaction ATP + H2O + 4 H(+)(in) = ADP + phosphate + 5 H(+)(out). Produces ATP from ADP in the presence of a proton gradient across the membrane. The catalytic sites are hosted primarily by the beta subunits. This is ATP synthase subunit beta, chloroplastic from Lactuca sativa (Garden lettuce).